A 105-amino-acid polypeptide reads, in one-letter code: U2-lycotoxin-Ls1a (105 aa).

Residues 1–17 (MIKYVLISALLVVAVYS) form the signal peptide. A propeptide spanning residues 18 to 41 (FTIEDNEDALLEEAEDELDTEEER) is cleaved from the precursor. 4 cysteine pairs are disulfide-bonded: cysteine 51/cysteine 67, cysteine 58/cysteine 97, cysteine 60/cysteine 83, and cysteine 69/cysteine 81.

It belongs to the neurotoxin 04 (omega-agtx) family. 01 (type I omega-agtx) subfamily. In terms of tissue distribution, expressed by the venom gland.

It localises to the secreted. Functionally, insecticidal to house crickets. It induces an excitatory slow-onset impact that leads to irreversible spastic paralysis. It also modifies human voltage-gated potassium channel Kv1.5/KCNA5. Most likely, it binds to the voltage-sensing domain of the channel, suggesting it does not block the pore but prevents its opening at physiological membrane potentials. The recombinant peptide binds to the channel in an irreversible manner and slows down the hKv1.5 current activation kinetics. It is not toxic to mice, when intracranially injected (at 0.5 ug/g mouse). This Lycosa singoriensis (Wolf spider) protein is U2-lycotoxin-Ls1a.